Consider the following 123-residue polypeptide: MPTIQQLIRNRRQPIENRTKSPALRGCPQRRGVCTRVYTVTPKKPNSALRKVARVRLTSGFEITAYIPGIGHNLQEHSVVLVRGGRVKDLPGVRYHIVRGTLDAVGVKDRQQGRSKYGVKKPK.

It belongs to the universal ribosomal protein uS12 family. Part of the 30S ribosomal subunit.

It localises to the plastid. Its subcellular location is the chloroplast. With S4 and S5 plays an important role in translational accuracy. Located at the interface of the 30S and 50S subunits. The polypeptide is Small ribosomal subunit protein uS12c (rps12) (Physcomitrium patens (Spreading-leaved earth moss)).